The primary structure comprises 151 residues: Transcriptional repressor NrdR (151 aa).

Residues 3-34 (CPYCGSLDNKVIDSRLSRDDTETRRRRECLEC) fold into a zinc finger. The 91-residue stretch at 49–139 (LMIVKKDGRR…VYREFKDVHD (91 aa)) folds into the ATP-cone domain.

Belongs to the NrdR family. Zn(2+) is required as a cofactor.

Negatively regulates transcription of bacterial ribonucleotide reductase nrd genes and operons by binding to NrdR-boxes. The protein is Transcriptional repressor NrdR of Desulfosudis oleivorans (strain DSM 6200 / JCM 39069 / Hxd3) (Desulfococcus oleovorans).